The chain runs to 243 residues: Collagen triple helix repeat-containing protein 1 (243 aa).

The N-terminal stretch at 1–30 is a signal peptide; that stretch reads MRPQGPAASPQRLRGLLLLLLLQLPAPSSA. Residues 57-90 form the Collagen-like domain; sequence QGPAGVPGRDGSPGANGIPGTPGIPGRDGFKGEK. Residues 62–85 form a disordered region; that stretch reads VPGRDGSPGANGIPGTPGIPGRDG. Asparagine 186 carries N-linked (GlcNAc...) asparagine glycosylation.

N-glycosylated. In terms of tissue distribution, isoform 1 is expressed in calcified atherosclerotic plaque and chondrocyte-like cells.

Its subcellular location is the secreted. It is found in the extracellular space. It localises to the extracellular matrix. Functionally, may act as a negative regulator of collagen matrix deposition. In Homo sapiens (Human), this protein is Collagen triple helix repeat-containing protein 1 (CTHRC1).